A 253-amino-acid chain; its full sequence is NADH-quinone oxidoreductase subunit C (253 aa).

2 disordered regions span residues 1 to 33 (MSPD…DTEP) and 234 to 253 (IPVE…RAYS).

This sequence belongs to the complex I 30 kDa subunit family. In terms of assembly, NDH-1 is composed of 14 different subunits. Subunits NuoB, C, D, E, F, and G constitute the peripheral sector of the complex.

It is found in the cell membrane. The catalysed reaction is a quinone + NADH + 5 H(+)(in) = a quinol + NAD(+) + 4 H(+)(out). Its function is as follows. NDH-1 shuttles electrons from NADH, via FMN and iron-sulfur (Fe-S) centers, to quinones in the respiratory chain. The immediate electron acceptor for the enzyme in this species is believed to be a menaquinone. Couples the redox reaction to proton translocation (for every two electrons transferred, four hydrogen ions are translocated across the cytoplasmic membrane), and thus conserves the redox energy in a proton gradient. The sequence is that of NADH-quinone oxidoreductase subunit C from Nocardia farcinica (strain IFM 10152).